The following is a 1238-amino-acid chain: Erythroid differentiation-related factor 1 (1238 aa).

Disordered stretches follow at residues 1-38 (MGDAKEAGAEGPPAGAAARGGLSLLSQGESEESSAQGS), 220-268 (QPVS…GSEP), 517-561 (PKKE…SDDS), and 620-647 (KKESDLPAADPSTPIPLKYEDESSRGGP). Composition is skewed to low complexity over residues 9-38 (AEGPPAGAAARGGLSLLSQGESEESSAQGS), 223-241 (SSTAEQQESSSSDQTNDSE), and 253-263 (SSVSEDPSASS). Residues 530 to 547 (NSDESYSEEEEEMPDSDE) are compositionally biased toward acidic residues. TPR repeat units lie at residues 693 to 726 (SKAYYVLSDAAMSLQKYGRALRYIKLALQSHDTY) and 914 to 953 (AQAHCGAGDELKREFSPEEGLYYNKAIDYYLKALRSLGTR).

Its subcellular location is the nucleus. Transcription factor involved in erythroid differentiation. Involved in transcriptional activation of the globin gene. This chain is Erythroid differentiation-related factor 1 (EDRF1), found in Homo sapiens (Human).